The chain runs to 152 residues: Ribosome maturation factor RimP (152 aa).

The protein belongs to the RimP family.

The protein resides in the cytoplasm. Required for maturation of 30S ribosomal subunits. The protein is Ribosome maturation factor RimP of Alteromonas mediterranea (strain DSM 17117 / CIP 110805 / LMG 28347 / Deep ecotype).